The following is a 77-amino-acid chain: Large ribosomal subunit protein bL28 (77 aa).

Belongs to the bacterial ribosomal protein bL28 family.

The sequence is that of Large ribosomal subunit protein bL28 from Ralstonia pickettii (strain 12J).